A 160-amino-acid polypeptide reads, in one-letter code: Transcription elongation factor GreA (160 aa).

Positions 2 to 81 (AEKKNILTYE…KNAEVVVEDE (80 aa)) form a coiled coil. The tract at residues 36–55 (KEAREQGDLSENAEYDAAKD) is disordered.

This sequence belongs to the GreA/GreB family.

Necessary for efficient RNA polymerase transcription elongation past template-encoded arresting sites. The arresting sites in DNA have the property of trapping a certain fraction of elongating RNA polymerases that pass through, resulting in locked ternary complexes. Cleavage of the nascent transcript by cleavage factors such as GreA or GreB allows the resumption of elongation from the new 3'terminus. GreA releases sequences of 2 to 3 nucleotides. The protein is Transcription elongation factor GreA of Lachnoclostridium phytofermentans (strain ATCC 700394 / DSM 18823 / ISDg) (Clostridium phytofermentans).